The following is a 29-amino-acid chain: Cycloviolacin-H2 (29 aa).

Residues 1-29 constitute a cross-link (cyclopeptide (Ser-Asn)); sequence SAIACGESCVYIPCFIPGCSCRNRVCYLN. Cystine bridges form between C5/C19, C9/C21, and C14/C26.

In terms of processing, this is a cyclic peptide.

In terms of biological role, probably participates in a plant defense mechanism. In Viola hederacea (Australian violet), this protein is Cycloviolacin-H2.